Here is a 202-residue protein sequence, read N- to C-terminus: Imidazoleglycerol-phosphate dehydratase (202 aa).

It belongs to the imidazoleglycerol-phosphate dehydratase family.

Its subcellular location is the cytoplasm. The enzyme catalyses D-erythro-1-(imidazol-4-yl)glycerol 3-phosphate = 3-(imidazol-4-yl)-2-oxopropyl phosphate + H2O. It participates in amino-acid biosynthesis; L-histidine biosynthesis; L-histidine from 5-phospho-alpha-D-ribose 1-diphosphate: step 6/9. This chain is Imidazoleglycerol-phosphate dehydratase, found in Parasynechococcus marenigrum (strain WH8102).